The primary structure comprises 258 residues: Nuclear egress protein 2 (258 aa).

The Perinuclear space portion of the chain corresponds to 1-228; the sequence is MLKEKMYDEL…TVPIFARRNN (228 aa). Residues 229–249 form a helical membrane-spanning segment; sequence ILCGFLVAALLIVCYVIFKEF. Topologically, residues 250-258 are nuclear; it reads ALSADFSAV.

Belongs to the herpesviridae NEC2 protein family. As to quaternary structure, forms a heterohexameric complex with NEC1. In terms of processing, phosphorylated.

The protein resides in the host nucleus inner membrane. Its function is as follows. Plays an essential role in virion nuclear egress, the first step of virion release from infected cell. Within the host nucleus, NEC1 interacts with the newly formed capsid through the vertexes and directs it to the inner nuclear membrane by associating with NEC2. Induces the budding of the capsid at the inner nuclear membrane as well as its envelopment into the perinuclear space. There, the NEC1/NEC2 complex promotes the fusion of the enveloped capsid with the outer nuclear membrane and the subsequent release of the viral capsid into the cytoplasm where it will reach the secondary budding sites in the host Golgi or trans-Golgi network. The sequence is that of Nuclear egress protein 2 from Homo sapiens (Human).